Here is a 720-residue protein sequence, read N- to C-terminus: Chloroplastic group IIA intron splicing facilitator CRS1, chloroplastic (720 aa).

The transit peptide at 1–77 (MRNGINILSY…DQFRENRGVS (77 aa)) directs the protein to the chloroplast. The stretch at 131–159 (KAMKKIVRNVEKLDEDSDSEETQMDDLSE) forms a coiled coil. 2 consecutive CRM domains span residues 205 to 301 (LILD…EGQD) and 359 to 456 (AKLT…EVAD). 2 coiled-coil regions span residues 447 to 477 (KDFLSDEVADLVEDRERLLSRYQHFEETKRE) and 517 to 553 (RNLETEAEKARLEKELKSQEHKLSILKSKIEKSNMEL). Residues 570-670 (EILTNEEREC…KNYKRPSSKL (101 aa)) enclose the CRM 3 domain.

In terms of assembly, homodimer. Interacts with RNA. Part of large ribonucleo-protein complexes that include group IIA introns and CRS1.

It localises to the plastid. Its subcellular location is the chloroplast stroma. In terms of biological role, required for the splicing of group IIA introns in chloroplasts, by regulating the intron folding. Forms splicing particles with RNA. May also be involved in chloroplast protein translation. The chain is Chloroplastic group IIA intron splicing facilitator CRS1, chloroplastic from Arabidopsis thaliana (Mouse-ear cress).